The sequence spans 45 residues: Large ribosomal subunit protein bL36 (45 aa).

The disordered stretch occupies residues 1–45; the sequence is MKVSSSIKADPSKGDKLVRRKGRLYVINKKDPNRKQRQAGPARKK.

The protein belongs to the bacterial ribosomal protein bL36 family.

This Chlamydia caviae (strain ATCC VR-813 / DSM 19441 / 03DC25 / GPIC) (Chlamydophila caviae) protein is Large ribosomal subunit protein bL36.